Here is a 199-residue protein sequence, read N- to C-terminus: Probable chemoreceptor glutamine deamidase CheD (199 aa).

The protein belongs to the CheD family.

The catalysed reaction is L-glutaminyl-[protein] + H2O = L-glutamyl-[protein] + NH4(+). In terms of biological role, probably deamidates glutamine residues to glutamate on methyl-accepting chemotaxis receptors (MCPs), playing an important role in chemotaxis. The protein is Probable chemoreceptor glutamine deamidase CheD of Nitratidesulfovibrio vulgaris (strain ATCC 29579 / DSM 644 / CCUG 34227 / NCIMB 8303 / VKM B-1760 / Hildenborough) (Desulfovibrio vulgaris).